Here is an 833-residue protein sequence, read N- to C-terminus: Leucine--tRNA ligase (833 aa).

The short motif at 41 to 52 (PYPSGAGLHVGH) is the 'HIGH' region element. Residues 610–614 (KMSKS) carry the 'KMSKS' region motif. K613 is an ATP binding site.

It belongs to the class-I aminoacyl-tRNA synthetase family.

Its subcellular location is the cytoplasm. The enzyme catalyses tRNA(Leu) + L-leucine + ATP = L-leucyl-tRNA(Leu) + AMP + diphosphate. The sequence is that of Leucine--tRNA ligase from Streptococcus pyogenes serotype M18 (strain MGAS8232).